The primary structure comprises 134 residues: Small ribosomal subunit protein uS8c (134 aa).

It belongs to the universal ribosomal protein uS8 family. Part of the 30S ribosomal subunit.

The protein localises to the plastid. Its function is as follows. One of the primary rRNA binding proteins, it binds directly to 16S rRNA central domain where it helps coordinate assembly of the platform of the 30S subunit. This chain is Small ribosomal subunit protein uS8c (rps8), found in Cuscuta obtusiflora (Peruvian dodder).